An 855-amino-acid polypeptide reads, in one-letter code: DNA mismatch repair protein MutS (855 aa).

Residue 616–623 (GPNMGGKS) coordinates ATP.

The protein belongs to the DNA mismatch repair MutS family.

Its function is as follows. This protein is involved in the repair of mismatches in DNA. It is possible that it carries out the mismatch recognition step. This protein has a weak ATPase activity. The sequence is that of DNA mismatch repair protein MutS from Salmonella schwarzengrund (strain CVM19633).